A 396-amino-acid polypeptide reads, in one-letter code: L-lactate dehydrogenase (396 aa).

Residues 1–380 (MIISAASDYR…SGDSLVQELG (380 aa)) form the FMN hydroxy acid dehydrogenase domain. Tyr-24 contacts substrate. FMN is bound by residues Ser-106 and Gln-127. Tyr-129 contacts substrate. FMN is bound at residue Thr-155. A substrate-binding site is contributed by Arg-164. Lys-251 serves as a coordination point for FMN. The active-site Proton acceptor is His-275. Arg-278 contacts substrate. 306 to 330 (DSGIRNGLDVVRMIALGADTVLLGR) lines the FMN pocket.

This sequence belongs to the FMN-dependent alpha-hydroxy acid dehydrogenase family. FMN is required as a cofactor.

The protein resides in the cell inner membrane. The catalysed reaction is (S)-lactate + A = pyruvate + AH2. Its function is as follows. Catalyzes the conversion of L-lactate to pyruvate. Is coupled to the respiratory chain. This Salmonella paratyphi A (strain ATCC 9150 / SARB42) protein is L-lactate dehydrogenase.